Reading from the N-terminus, the 113-residue chain is Hemerythrin (113 aa).

Positions 25, 54, 58, 73, 77, 101, and 106 each coordinate Fe cation.

Belongs to the hemerythrin family. In terms of assembly, homooctamer.

Its function is as follows. Hemerythrin is a respiratory protein in blood cells of certain marine worms. The oxygen-binding site in each chain contains two iron atoms. The polypeptide is Hemerythrin (Themiste dyscrita (Peanut worm)).